The sequence spans 399 residues: Syndecan (399 aa).

The N-terminal stretch at 1–28 is a signal peptide; sequence MKPKQKISVEPLLLVAILIGVLVAATHA. Residues 28–319 are disordered; that stretch reads AQDQKSVKPS…TKGIDHRPNG (292 aa). Residues 29–340 are Extracellular-facing; sequence QDQKSVKPSA…TSSFFSQPGI (312 aa). Residues 36–46 are compositionally biased toward low complexity; sequence PSAAAPSAAAS. A glycan (O-linked (Xyl...) (glycosaminoglycan) serine) is linked at Ser62. Positions 67-77 are enriched in basic and acidic residues; it reads GIHEDLEKDPD. Ser79, Ser81, and Ser110 each carry an O-linked (Xyl...) (glycosaminoglycan) serine glycan. Residues 99–116 show a composition bias toward polar residues; sequence SHNTRISQSSNSGINTAH. A compositionally biased stretch (low complexity) spans 117–172; the sequence is TPTQTSSTIPTTSTSTPMPTTTPTATTPASTTTAAATQISSFANSSSTTTTTLAPT. Asn160 carries N-linked (GlcNAc...) asparagine glycosylation. The span at 191-214 shows a compositional bias: acidic residues; it reads TESSGDGIDADAEDDDEDDGDDKD. Ser194 is a glycosylation site (O-linked (Xyl...) (glycosaminoglycan) serine). The span at 215–226 shows a compositional bias: basic and acidic residues; the sequence is YDYNKELDKEID. Residues 253-270 are compositionally biased toward acidic residues; that stretch reads DEIDVDGGDEDDNGDSDI. Polar residues predominate over residues 299-309; the sequence is PNTNVNSQPSD. A helical transmembrane segment spans residues 341–365; it reads LAAVIGGAVVGLLCAILVVMFIVYR. Residues 366 to 399 are Cytoplasmic-facing; that stretch reads MRKKDEGSYALDEPKRSPANNSYAKNANNREFYA. A disordered region spans residues 373 to 399; it reads SYALDEPKRSPANNSYAKNANNREFYA. Residues 383–399 show a composition bias toward polar residues; it reads PANNSYAKNANNREFYA.

It belongs to the syndecan proteoglycan family. As to expression, in 13-16 hours embryos, expressed in lymph glands, peripheral and central nervous system and basal surfaces of gut epithelia. Sdc and robo are coexpressed in domains adjacent to slit; in tracheal pits and midline glia cells.

It is found in the membrane. Functionally, cell surface proteoglycan that bears heparan sulfate. Required for axonal and myotube guidance, is a necessary component of slit/robo signaling and is required in the slit target cells. The protein is Syndecan (Sdc) of Drosophila melanogaster (Fruit fly).